The primary structure comprises 532 residues: Methionine--tRNA ligase (532 aa).

Residues 16 to 26 carry the 'HIGH' region motif; it reads YYVNDVPHLGS. Positions 131, 134, 149, and 152 each coordinate Zn(2+). The 'KMSKS' region motif lies at 305–309; that stretch reads KMGKS. Lys-308 provides a ligand contact to ATP.

This sequence belongs to the class-I aminoacyl-tRNA synthetase family. MetG type 2A subfamily. As to quaternary structure, monomer. It depends on Zn(2+) as a cofactor.

The protein resides in the cytoplasm. The catalysed reaction is tRNA(Met) + L-methionine + ATP = L-methionyl-tRNA(Met) + AMP + diphosphate. In terms of biological role, is required not only for elongation of protein synthesis but also for the initiation of all mRNA translation through initiator tRNA(fMet) aminoacylation. In Synechocystis sp. (strain ATCC 27184 / PCC 6803 / Kazusa), this protein is Methionine--tRNA ligase (metG).